The sequence spans 117 residues: NADH-ubiquinone oxidoreductase chain 3 (117 aa).

Transmembrane regions (helical) follow at residues 5–25, 57–77, and 86–106; these read ALSS…AWVL, FFLL…LMPL, and VFTT…GLIH.

The protein belongs to the complex I subunit 3 family.

The protein resides in the mitochondrion membrane. It catalyses the reaction a ubiquinone + NADH + 5 H(+)(in) = a ubiquinol + NAD(+) + 4 H(+)(out). Its function is as follows. Core subunit of the mitochondrial membrane respiratory chain NADH dehydrogenase (Complex I) that is believed to belong to the minimal assembly required for catalysis. Complex I functions in the transfer of electrons from NADH to the respiratory chain. The immediate electron acceptor for the enzyme is believed to be ubiquinone. This is NADH-ubiquinone oxidoreductase chain 3 (ND3) from Lumbricus terrestris (Common earthworm).